A 252-amino-acid chain; its full sequence is tRNA pseudouridine synthase A (252 aa).

The Nucleophile role is filled by Asp-52. Tyr-111 provides a ligand contact to substrate.

The protein belongs to the tRNA pseudouridine synthase TruA family. As to quaternary structure, homodimer.

The enzyme catalyses uridine(38/39/40) in tRNA = pseudouridine(38/39/40) in tRNA. Its function is as follows. Formation of pseudouridine at positions 38, 39 and 40 in the anticodon stem and loop of transfer RNAs. This chain is tRNA pseudouridine synthase A, found in Methylorubrum populi (strain ATCC BAA-705 / NCIMB 13946 / BJ001) (Methylobacterium populi).